The primary structure comprises 264 residues: Proliferating cell nuclear antigen (264 aa).

The DNA-binding element occupies 61-80 (RCDRNISMGMNLGNMAKMLK).

Belongs to the PCNA family.

The protein localises to the nucleus. Its function is as follows. This protein is an auxiliary protein of DNA polymerase delta and is involved in the control of eukaryotic DNA replication by increasing the polymerase's processibility during elongation of the leading strand. The protein is Proliferating cell nuclear antigen of Daucus carota (Wild carrot).